We begin with the raw amino-acid sequence, 286 residues long: Dioxygenase trt7 (286 aa).

Positions 129, 131, and 206 each coordinate Fe cation.

This sequence belongs to the PhyH family. Homodimer. Requires Fe cation as cofactor.

The protein operates within secondary metabolite biosynthesis; terpenoid biosynthesis. Its function is as follows. Dioxygenase; part of the gene cluster that mediates the biosynthesis of terretonin, a fungal meroterpenoid that acts as a mycotoxin. The first step of the pathway is the synthesis of 3,5-dimethylorsellinic acid (DMOA) by the polyketide synthase trt4. DMOA is then prenylated into farnesyl-DMOA by the polyprenyl transferase trt2. Methylation by the methyltransferase trt5 then leads to farnesyl-DMOA methyl ester which is further subject to epoxidation by the FAD-dependent monooxygenase trt8 to yield epoxyfarnesyl-DMOA methyl ester. Cyclization of epoxyfarnesyl-DMOA methyl ester by the terpene cyclase trt1 leads to a tetracycle intermediate which is in turn converted to preterretonin. Dehydrogenase trt9 comes next to transform preterretonin to preterrenoid. The FAD-dependent monooxygenase trt3 is then required for the C-hydroxylation at C16 of preterrenoid to yield terrenoid. The cytochrome P450 trt6 catalyzes three successive oxidations to transform terrenoid into an unstable intermediate, which then undergoes the D-ring expansion and unusual rearrangement of the methoxy group to afford the core skeleton of terretonin. Trt14 catalyzes the D-ring expansion of terretonin involving intramolecular methoxy rearrangement as well as the hydrolysis of the expanded D-ring and the methyl ester moiety. Finally, the nonheme iron-dependent dioxygenase trt7 accomplishes the last two oxidation reactions steps to complete the biosynthesis of terretonin. Terretonin C is produced via spontaneous decarboxylation of the terretonin precursor. Another shunt product of the terretonin biosynthesis is dihydrofarnesyl-DMOA, derived from epoxyfarnesyl-DMOA through hydrolysis of the epoxide. The protein is Dioxygenase trt7 of Aspergillus terreus (strain NIH 2624 / FGSC A1156).